Reading from the N-terminus, the 138-residue chain is Photosystem II extrinsic protein U (138 aa).

The first 28 residues, 1–28 (MSRVVSALMGLVLMFGCAFFSVQPQAQA), serve as a signal peptide directing secretion. Residues 29 to 42 (LDLSNGFVSAAVLG) constitute a propeptide that is removed on maturation.

Belongs to the PsbU family. In terms of assembly, PSII is composed of 1 copy each of membrane proteins PsbA, PsbB, PsbC, PsbD, PsbE, PsbF, PsbH, PsbI, PsbJ, PsbK, PsbL, PsbM, PsbT, PsbX, PsbY, PsbZ, Psb30/Ycf12, peripheral proteins PsbO, CyanoQ (PsbQ), PsbU, PsbV and a large number of cofactors. It forms dimeric complexes.

It is found in the cellular thylakoid membrane. One of the extrinsic, lumenal subunits of photosystem II (PSII). PSII is a light-driven water plastoquinone oxidoreductase, using light energy to abstract electrons from H(2)O, generating a proton gradient subsequently used for ATP formation. The extrinsic proteins stabilize the structure of photosystem II oxygen-evolving complex (OEC), the ion environment of oxygen evolution and protect the OEC against heat-induced inactivation. This is Photosystem II extrinsic protein U from Picosynechococcus sp. (strain ATCC 27264 / PCC 7002 / PR-6) (Agmenellum quadruplicatum).